The primary structure comprises 133 residues: Small ribosomal subunit protein uS11 (133 aa).

Residues 114–133 form a disordered region; it reads VTPIPHDGTRPPGGKRGRRV.

Belongs to the universal ribosomal protein uS11 family. Part of the 30S ribosomal subunit.

Located on the platform of the 30S subunit. This is Small ribosomal subunit protein uS11 from Archaeoglobus fulgidus (strain ATCC 49558 / DSM 4304 / JCM 9628 / NBRC 100126 / VC-16).